The chain runs to 777 residues: Hepatocyte growth factor-regulated tyrosine kinase substrate (777 aa).

The region spanning 15–143 (ATSQLLLETD…IMKVEGHVFP (129 aa)) is the VHS domain. An FYVE-type zinc finger spans residues 160–220 (WVDAEECHRC…VCEPCYEQLN (61 aa)). Zn(2+)-binding residues include Cys-166, Cys-169, Cys-182, Cys-185, Cys-190, and Cys-193. N6-acetyllysine is present on Lys-207. 2 residues coordinate Zn(2+): Cys-212 and Cys-215. Phosphotyrosine is present on Tyr-216. The tract at residues 223 to 319 (AEGKATSTTE…SPVNSSAPLA (97 aa)) is disordered. Residues 225-543 (GKATSTTELP…QRLQEQEKER (319 aa)) form an interaction with SNX1 region. Residues 258 to 277 (QEEEELQLALALSQSEAEEK) enclose the UIM domain. Residues 290–311 (PKAEPMPSASSAPPASSLYSSP) show a composition bias toward low complexity. Residues Tyr-308, Tyr-329, and Tyr-334 each carry the phosphotyrosine modification. Residues 338–407 (KQEEARKSPT…NGESEESHEQ (70 aa)) are disordered. Positions 445–543 (SINGMHPQLL…QRLQEQEKER (99 aa)) are interaction with SNAP25 and TRAK2. The tract at residues 454–572 (LELLNQLDER…FPLPYAQLQA (119 aa)) is interaction with STAM. An interaction with NF2 region spans residues 480–777 (ARGALSALRE…GSEAQLISFD (298 aa)). Lys-551 is modified (N6-succinyllysine). Residues 718–777 (LPSQDASLPPQQPYIAGQQPMYQQMAPSGGPPQQQPPVAQQPQAQGPPAQGSEAQLISFD) form a disordered region. The span at 753-768 (PPVAQQPQAQGPPAQG) shows a compositional bias: low complexity.

As to quaternary structure, component of the ESCRT-0 complex composed of STAM or STAM2 and HGS. Part of a complex at least composed of HSG, STAM2 (or probably STAM) and EPS15. Interacts with STAM. Interacts with STAM2. Interacts with EPS15; the interaction is direct, calcium-dependent and inhibited by SNAP25. Identified in a complex with STAM and LITAF. Found in a complex with STAM and E3 ligase ITCH and DTX3L. Interacts with E3 ligase DTX3L; the interaction brings together STAM and HSG, promotes their recruitment to early endosomes and decreases STAM and HGS ubiquitination by ITCH. Interacts with NF2; the interaction is direct. Interacts with ubiquitin; the interaction is direct. Interacts with VPS37C. Interacts with SMAD1, SMAD2 and SMAD3. Interacts with TSG101; the interaction mediates the association with the ESCRT-I complex. Interacts with SNAP25; the interaction is direct and decreases with addition of increasing concentrations of free calcium. Interacts with SNX1; the interaction is direct. Component of a 550 kDa membrane complex at least composed of HGS and SNX1 but excluding EGFR. Interacts with TRAK1. Interacts with TRAK2. Component of the CART complex, at least composed of ACTN4, HGS/HRS, MYO5B and TRIM3. Interacts (via UIM domain) with UBQLN1 (via ubiquitin-like domain). Interacts with ARRDC3. Identified in a complex containing at least ARRDC4, AVPR2 and HGS. Interacts with LAPTM4B; promotes HGS ubiquitination. In terms of processing, phosphorylated on Tyr-334. A minor site of phosphorylation on Tyr-329 is detected. Phosphorylation occurs in response to EGF, IL-2, GM-CSF and HGF. Ubiquitinated. Ubiquitinated by ITCH. In terms of tissue distribution, ubiquitous expression in adult and fetal tissues with higher expression in testis and peripheral blood leukocytes.

It is found in the cytoplasm. The protein localises to the early endosome membrane. It localises to the endosome. The protein resides in the multivesicular body membrane. Involved in intracellular signal transduction mediated by cytokines and growth factors. When associated with STAM, it suppresses DNA signaling upon stimulation by IL-2 and GM-CSF. Could be a direct effector of PI3-kinase in vesicular pathway via early endosomes and may regulate trafficking to early and late endosomes by recruiting clathrin. May concentrate ubiquitinated receptors within clathrin-coated regions. Involved in down-regulation of receptor tyrosine kinase via multivesicular body (MVBs) when complexed with STAM (ESCRT-0 complex). The ESCRT-0 complex binds ubiquitin and acts as a sorting machinery that recognizes ubiquitinated receptors and transfers them to further sequential lysosomal sorting/trafficking processes. May contribute to the efficient recruitment of SMADs to the activin receptor complex. Involved in receptor recycling via its association with the CART complex, a multiprotein complex required for efficient transferrin receptor recycling but not for EGFR degradation. This is Hepatocyte growth factor-regulated tyrosine kinase substrate (HGS) from Homo sapiens (Human).